The sequence spans 580 residues: Peptide transporter PTR_B (580 aa).

The span at 1–30 (MSTEKLQNDDKVVDEKYVDADEHSLVRSQD) shows a compositional bias: basic and acidic residues. The segment at 1-45 (MSTEKLQNDDKVVDEKYVDADEHSLVRSQDESFPQTEEGGEPTDH) is disordered. Residues 57–78 (IPMSCWLVAIVELSERFTYYGL) traverse the membrane as a helical segment. The N-linked (GlcNAc...) asparagine glycan is linked to Asn-101. Helical transmembrane passes span 107–127 (ALSY…AWIA), 134–154 (YFTI…LFIT), 163–183 (TTSL…TGGI), 219–239 (VSNV…SVIA), 249–269 (FWAA…ALVL), 326–346 (ALYA…YGQM), 370–390 (INSI…YPFI), 402–422 (IFWG…LQHF), 449–469 (IALQ…ASIT), 484–504 (SFIM…GIAL), and 513–533 (MVWT…IFWF).

It belongs to the major facilitator superfamily. Proton-dependent oligopeptide transporter (POT/PTR) (TC 2.A.17) family.

It is found in the cell membrane. It catalyses the reaction a dipeptide(out) + H(+)(out) = a dipeptide(in) + H(+)(in). It carries out the reaction an L-amino acid tripeptide(out) + H(+)(out) = an L-amino acid tripeptide(in) + H(+)(in). Functionally, peptide transporter that exploits the inwardly directed proton motive force to facilitate the cellular uptake of di/tripeptides. Shows strong uptake specificity towards the dipeptides Tyr-Phe and Gly-His, when compared to PTR_A and PTR_C. The protein is Peptide transporter PTR_B of Candidozyma auris (Yeast).